A 399-amino-acid polypeptide reads, in one-letter code: Serine/threonine-protein kinase PknL (399 aa).

Over M1–R368 the chain is Cytoplasmic. The region spanning Y19–I278 is the Protein kinase domain. ATP contacts are provided by residues I25–V33 and K48. Position 32 is a phosphothreonine; by autocatalysis (T32). Phosphothreonine; by autocatalysis is present on T62. The Proton acceptor role is filled by D142. Phosphothreonine; by autocatalysis is present on residues T173, T175, and T323. Positions G312–P346 are disordered. A helical membrane pass occupies residues M369–W389. The Extracellular segment spans residues T390–L399.

This sequence belongs to the protein kinase superfamily. Ser/Thr protein kinase family. In terms of processing, autophosphorylated. Thr-173 is required for autophosphorylation and transphosphorylation activities. Thr-175 is not necessary for autophosphorylation activity, but is required for full kinase activity.

It is found in the cell membrane. It catalyses the reaction L-seryl-[protein] + ATP = O-phospho-L-seryl-[protein] + ADP + H(+). It carries out the reaction L-threonyl-[protein] + ATP = O-phospho-L-threonyl-[protein] + ADP + H(+). Functionally, phosphorylates the DNA-binding protein MT2231. May be involved in the regulation of cell division and cell envelope biosynthesis. In Mycobacterium tuberculosis (strain CDC 1551 / Oshkosh), this protein is Serine/threonine-protein kinase PknL (pknL).